A 315-amino-acid chain; its full sequence is Ribosomal RNA small subunit methyltransferase H (315 aa).

S-adenosyl-L-methionine is bound by residues 36–38 (GGH), aspartate 56, phenylalanine 81, aspartate 103, and glutamine 110.

This sequence belongs to the methyltransferase superfamily. RsmH family.

It localises to the cytoplasm. It carries out the reaction cytidine(1402) in 16S rRNA + S-adenosyl-L-methionine = N(4)-methylcytidine(1402) in 16S rRNA + S-adenosyl-L-homocysteine + H(+). Its function is as follows. Specifically methylates the N4 position of cytidine in position 1402 (C1402) of 16S rRNA. The polypeptide is Ribosomal RNA small subunit methyltransferase H (Idiomarina loihiensis (strain ATCC BAA-735 / DSM 15497 / L2-TR)).